The sequence spans 78 residues: Exodeoxyribonuclease 7 small subunit (78 aa).

This sequence belongs to the XseB family. As to quaternary structure, heterooligomer composed of large and small subunits.

The protein localises to the cytoplasm. It carries out the reaction Exonucleolytic cleavage in either 5'- to 3'- or 3'- to 5'-direction to yield nucleoside 5'-phosphates.. In terms of biological role, bidirectionally degrades single-stranded DNA into large acid-insoluble oligonucleotides, which are then degraded further into small acid-soluble oligonucleotides. The protein is Exodeoxyribonuclease 7 small subunit of Nocardia farcinica (strain IFM 10152).